A 295-amino-acid polypeptide reads, in one-letter code: Trimeric intracellular cation channel type A (295 aa).

The Lumenal segment spans residues 1-11; the sequence is MELLSALSLDD. A helical transmembrane segment spans residues 12 to 32; it reads LAVAFSKLPVFPLFDVAYYII. Over 33–51 the chain is Cytoplasmic; the sequence is SILYLKYEPGAVDLSKRSP. The helical transmembrane segment at 52–72 threads the bilayer; it reads VASWLCAMLYCFGSYILADVL. Over 73-84 the chain is Lumenal; that stretch reads LGESPIHYFSNN. Ca(2+) is bound at residue Gly74. The chain crosses the membrane as a helical span at residues 85-105; that stretch reads ANILLASAVWYLTFFCPLNIF. The Cytoplasmic portion of the chain corresponds to 106 to 144; sequence YKIVSFLPLKLVLVGMKEVVRVRKIAMGIHHAHHHYHHG. A 1,2-diacyl-sn-glycero-3-phospho-(1D-myo-inositol-4,5-bisphosphate)-binding residues include Lys122 and Arg126. Residues 145–165 form a helical membrane-spanning segment; that stretch reads WVIMVLIGWVKGSGVALMSNL. Residues 166–178 lie on the Lumenal side of the membrane; it reads EQLLRGVWKPETN. Residues 179 to 199 form a helical membrane-spanning segment; it reads EILHMSFPTKASLYGAILFTL. The Cytoplasmic portion of the chain corresponds to 200-201; that stretch reads QQ. Residues 202-222 traverse the membrane as a helical segment; it reads AHWLPISKAYLIFFFTLFMAI. The Lumenal portion of the chain corresponds to 223–233; that stretch reads CKIYMTATHSH. Residues 234–254 form a helical membrane-spanning segment; sequence GSPFAIFESGICCVLFGAANG. Over 255 to 295 the chain is Cytoplasmic; sequence DHDDHGDHHHHHDDHDVSHSTVKSKEELNEGTRKRKTKKAE. A compositionally biased stretch (basic and acidic residues) spans 259–286; that stretch reads HGDHHHHHDDHDVSHSTVKSKEELNEGT. The segment at 259-295 is disordered; the sequence is HGDHHHHHDDHDVSHSTVKSKEELNEGTRKRKTKKAE.

The protein belongs to the TMEM38 family. Homotrimer; conformation seems to be controled by binding to diacylglycerol (DAG).

The protein localises to the sarcoplasmic reticulum membrane. It is found in the nucleus membrane. The catalysed reaction is K(+)(in) = K(+)(out). With respect to regulation, channel activity is activated by a change of voltage within the sarcoplasmic reticulum lumen and blocked by luminal high Ca(2+) levels. Intracellular monovalent cation channel required for maintenance of rapid intracellular calcium release. Acts as a potassium counter-ion channel that functions in synchronization with calcium release from intracellular stores. Opened by a change of voltage within the sarcoplasmic reticulum lumen. This Xenopus tropicalis (Western clawed frog) protein is Trimeric intracellular cation channel type A (tmem38a).